The primary structure comprises 545 residues: Hydroxylamine reductase (545 aa).

Cysteine 7, cysteine 10, cysteine 19, and cysteine 25 together coordinate [4Fe-4S] cluster. The hybrid [4Fe-2O-2S] cluster site is built by histidine 241, glutamate 265, cysteine 309, cysteine 400, cysteine 428, cysteine 453, glutamate 488, and lysine 490. Cysteine 400 carries the post-translational modification Cysteine persulfide; in oxidized form.

It belongs to the HCP family. In terms of assembly, monomer. The cofactor is [4Fe-4S] cluster. It depends on hybrid [4Fe-2O-2S] cluster as a cofactor.

The protein resides in the cytoplasm. The catalysed reaction is A + NH4(+) + H2O = hydroxylamine + AH2 + H(+). In terms of biological role, catalyzes the reduction of hydroxylamine to form NH(3) and H(2)O. This is Hydroxylamine reductase from Desulfovibrio desulfuricans (strain ATCC 27774 / DSM 6949 / MB).